The primary structure comprises 86 residues: Small nuclear ribonucleoprotein F (86 aa).

Positions 14-86 (NPKPFLKGLV…NVLYIRELPN (73 aa)) constitute a Sm domain.

This sequence belongs to the snRNP Sm proteins family. SmF/LSm6 subfamily. As to quaternary structure, component of the Sm core complex, present in spliceosomal snRNP U1, U2, U4/U6 and U5. The core complex contains SMB1, SMD1, SMD2, SMD3, SME1, SMX3 and SMX2 (Sm proteins B, D1, D2, D3, E, F and G, respectively), and is probably a heptameric ring structure. SMX3 specifically interacts with SME1. Belongs to the CWC complex (or CEF1-associated complex), a spliceosome sub-complex reminiscent of a late-stage spliceosome composed of the U2, U5 and U6 snRNAs and at least BUD13, BUD31, BRR2, CDC40, CEF1, CLF1, CUS1, CWC2, CWC15, CWC21, CWC22, CWC23, CWC24, CWC25, CWC27, ECM2, HSH155, IST3, ISY1, LEA1, MSL1, NTC20, PRP8, PRP9, PRP11, PRP19, PRP21, PRP22, PRP45, PRP46, SLU7, SMB1, SMD1, SMD2, SMD3, SMX2, SMX3, SNT309, SNU114, SPP2, SYF1, SYF2, RSE1 and YJU2. Component of the U4/U6-U5 tri-snRNP complex composed of the U4, U6 and U5 snRNAs and at least PRP3, PRP4, PRP6, PRP8, PRP18, PRP31, PRP38, SNU13, SNU23, SNU66, SNU114, SPP381, SMB1, SMD1, SMD2, SMD3, SMX2, SMX3, LSM2, LSM3, LSM4, LSM5, LSM6, LSM7, LSM8, BRR2 and DIB1.

Its subcellular location is the nucleus. The protein localises to the cytoplasm. Plays a role in pre-mRNA splicing as a core component of the spliceosomal U1, U2, U4 and U5 small nuclear ribonucleoproteins (snRNPs), the building blocks of the spliceosome. This Saccharomyces cerevisiae (strain ATCC 204508 / S288c) (Baker's yeast) protein is Small nuclear ribonucleoprotein F (SMX3).